Consider the following 163-residue polypeptide: Protein-export protein SecB (163 aa).

Belongs to the SecB family. In terms of assembly, homotetramer, a dimer of dimers. One homotetramer interacts with 1 SecA dimer.

Its subcellular location is the cytoplasm. In terms of biological role, one of the proteins required for the normal export of preproteins out of the cell cytoplasm. It is a molecular chaperone that binds to a subset of precursor proteins, maintaining them in a translocation-competent state. It also specifically binds to its receptor SecA. The chain is Protein-export protein SecB from Caulobacter vibrioides (strain ATCC 19089 / CIP 103742 / CB 15) (Caulobacter crescentus).